The sequence spans 59 residues: Large ribosomal subunit protein bL32 (59 aa).

Residues 1-25 (MAVQQNKKSPSKRGMHRSHDFLNAA) are disordered.

Belongs to the bacterial ribosomal protein bL32 family.

The chain is Large ribosomal subunit protein bL32 from Paraburkholderia phymatum (strain DSM 17167 / CIP 108236 / LMG 21445 / STM815) (Burkholderia phymatum).